The chain runs to 376 residues: Deoxyguanosinetriphosphate triphosphohydrolase-like protein (376 aa).

The segment at 1–32 is disordered; that stretch reads MEPSFAPYAAHSSQTRGRVHREAPAAPRSEFQ. The HD domain maps to 65-196; that stretch reads RLTHSIEVAQ…ANLADEIAYN (132 aa).

It belongs to the dGTPase family. Type 2 subfamily.

The sequence is that of Deoxyguanosinetriphosphate triphosphohydrolase-like protein from Thiobacillus denitrificans (strain ATCC 25259 / T1).